A 395-amino-acid chain; its full sequence is MAKLGTPLSPSATRVLLLGSGELGKEVAIELQRLGVEVIAADRYADAPAMQVAHRSHVIDMLDAMALRALIAQEQPHLVVPEIEAIHTETLVQLEQEQGLRVIPTARAARLTMDREGIRRLAAETLGLPTSPYRFVDTEAEYRAAVAAIGLPCVVKPVMSSSGKGQSTLRSEADIAPAWEYAQTGGRAGAGRCIVEGFIDFDYEITLLTVRHAGGTSFCAPIGHLQKDGDYRESWQPQPMSSAALARAEEISRAITDDLGGWGLFGVELFVKGDEVWFSEVSPRPHDTGLVTLVSQELSEFALHARAILGLPIPVIRQSGPSASCALLAHGEGVPYFNNVAAALRVPDTAVRLFGKPSVHGHRRVGVTLARAETIDEARAIARDAADAIGVELRP.

Residues Glu22–Leu23 and Glu82 each bind N(1)-(5-phospho-beta-D-ribosyl)glycinamide. ATP contacts are provided by residues Arg115, Lys156, Ser161 to Gln166, Glu196 to Ile199, and Glu204. Residues Arg120–Leu309 enclose the ATP-grasp domain. 2 residues coordinate Mg(2+): Glu268 and Glu280. N(1)-(5-phospho-beta-D-ribosyl)glycinamide contacts are provided by residues Asp287, Lys356, and Arg363 to Arg364.

Belongs to the PurK/PurT family. Homodimer.

The catalysed reaction is N(1)-(5-phospho-beta-D-ribosyl)glycinamide + formate + ATP = N(2)-formyl-N(1)-(5-phospho-beta-D-ribosyl)glycinamide + ADP + phosphate + H(+). It functions in the pathway purine metabolism; IMP biosynthesis via de novo pathway; N(2)-formyl-N(1)-(5-phospho-D-ribosyl)glycinamide from N(1)-(5-phospho-D-ribosyl)glycinamide (formate route): step 1/1. In terms of biological role, involved in the de novo purine biosynthesis. Catalyzes the transfer of formate to 5-phospho-ribosyl-glycinamide (GAR), producing 5-phospho-ribosyl-N-formylglycinamide (FGAR). Formate is provided by PurU via hydrolysis of 10-formyl-tetrahydrofolate. The polypeptide is Formate-dependent phosphoribosylglycinamide formyltransferase (Stenotrophomonas maltophilia (strain R551-3)).